Consider the following 94-residue polypeptide: Co-chaperonin GroES (94 aa).

The protein belongs to the GroES chaperonin family. As to quaternary structure, heptamer of 7 subunits arranged in a ring. Interacts with the chaperonin GroEL.

The protein localises to the cytoplasm. Functionally, together with the chaperonin GroEL, plays an essential role in assisting protein folding. The GroEL-GroES system forms a nano-cage that allows encapsulation of the non-native substrate proteins and provides a physical environment optimized to promote and accelerate protein folding. GroES binds to the apical surface of the GroEL ring, thereby capping the opening of the GroEL channel. This is Co-chaperonin GroES from Streptococcus mitis.